The primary structure comprises 76 residues: Small ribosomal subunit protein bS21A (76 aa).

The span at 35-52 (HYEKPSEKRAREKAEAVR) shows a compositional bias: basic and acidic residues. Residues 35 to 76 (HYEKPSEKRAREKAEAVRRARKLARKRAQREGLVSGRPAAAR) form a disordered region. Over residues 53-62 (RARKLARKRA) the composition is skewed to basic residues.

The protein belongs to the bacterial ribosomal protein bS21 family.

In Chelativorans sp. (strain BNC1), this protein is Small ribosomal subunit protein bS21A.